The chain runs to 142 residues: Large ribosomal subunit protein bL27m (142 aa).

The tract at residues 27–48 (TKKSAGSTKNGRTSQPKNLGLK) is disordered. The segment covering 30–43 (SAGSTKNGRTSQPK) has biased composition (polar residues).

It belongs to the bacterial ribosomal protein bL27 family.

It localises to the mitochondrion. The polypeptide is Large ribosomal subunit protein bL27m (mrpl27) (Dictyostelium discoideum (Social amoeba)).